The chain runs to 475 residues: Glutamyl-tRNA(Gln) amidotransferase subunit A (475 aa).

Active-site charge relay system residues include lysine 69 and serine 144. Serine 168 functions as the Acyl-ester intermediate in the catalytic mechanism.

This sequence belongs to the amidase family. GatA subfamily. In terms of assembly, heterotrimer of A, B and C subunits.

The enzyme catalyses L-glutamyl-tRNA(Gln) + L-glutamine + ATP + H2O = L-glutaminyl-tRNA(Gln) + L-glutamate + ADP + phosphate + H(+). Allows the formation of correctly charged Gln-tRNA(Gln) through the transamidation of misacylated Glu-tRNA(Gln) in organisms which lack glutaminyl-tRNA synthetase. The reaction takes place in the presence of glutamine and ATP through an activated gamma-phospho-Glu-tRNA(Gln). The protein is Glutamyl-tRNA(Gln) amidotransferase subunit A of Methanosarcina barkeri (strain Fusaro / DSM 804).